The following is a 212-amino-acid chain: MVQTAPSIFLSAALIALAYLIGSIPFAVVVSKLMGLQDPRSYGSKNPGATNVLRSGNKAAAALTLLGDAFKGWFALWLAQMLAPGLSWTVFALVALAAFLGHLYPVFLGFKGGKGVATALGILLAIHPGLALATAATWVIIAVFFRYSSLAALVAAFFAPVYYLFGSGVAWYAQGPVGVALAIITLLLFYRHRANIARLLAGTESRIGAKKK.

Transmembrane regions (helical) follow at residues 8–28 (IFLS…PFAV), 59–79 (AAAA…LWLA), 90–110 (VFAL…FLGF), 122–142 (ILLA…VIIA), 148–168 (SSLA…FGSG), and 169–189 (VAWY…LLLF).

Belongs to the PlsY family. Probably interacts with PlsX.

Its subcellular location is the cell inner membrane. The enzyme catalyses an acyl phosphate + sn-glycerol 3-phosphate = a 1-acyl-sn-glycero-3-phosphate + phosphate. It functions in the pathway lipid metabolism; phospholipid metabolism. In terms of biological role, catalyzes the transfer of an acyl group from acyl-phosphate (acyl-PO(4)) to glycerol-3-phosphate (G3P) to form lysophosphatidic acid (LPA). This enzyme utilizes acyl-phosphate as fatty acyl donor, but not acyl-CoA or acyl-ACP. The protein is Glycerol-3-phosphate acyltransferase of Bordetella petrii (strain ATCC BAA-461 / DSM 12804 / CCUG 43448).